We begin with the raw amino-acid sequence, 218 residues long: dTTP/UTP pyrophosphatase (218 aa).

Catalysis depends on Asp-69, which acts as the Proton acceptor.

Belongs to the Maf family. YhdE subfamily. A divalent metal cation serves as cofactor.

It localises to the cytoplasm. The enzyme catalyses dTTP + H2O = dTMP + diphosphate + H(+). It catalyses the reaction UTP + H2O = UMP + diphosphate + H(+). Its function is as follows. Nucleoside triphosphate pyrophosphatase that hydrolyzes dTTP and UTP. May have a dual role in cell division arrest and in preventing the incorporation of modified nucleotides into cellular nucleic acids. In Thermomicrobium roseum (strain ATCC 27502 / DSM 5159 / P-2), this protein is dTTP/UTP pyrophosphatase.